A 95-amino-acid chain; its full sequence is Aspartyl/glutamyl-tRNA(Asn/Gln) amidotransferase subunit C (95 aa).

It belongs to the GatC family. In terms of assembly, heterotrimer of A, B and C subunits.

The enzyme catalyses L-glutamyl-tRNA(Gln) + L-glutamine + ATP + H2O = L-glutaminyl-tRNA(Gln) + L-glutamate + ADP + phosphate + H(+). The catalysed reaction is L-aspartyl-tRNA(Asn) + L-glutamine + ATP + H2O = L-asparaginyl-tRNA(Asn) + L-glutamate + ADP + phosphate + 2 H(+). Its function is as follows. Allows the formation of correctly charged Asn-tRNA(Asn) or Gln-tRNA(Gln) through the transamidation of misacylated Asp-tRNA(Asn) or Glu-tRNA(Gln) in organisms which lack either or both of asparaginyl-tRNA or glutaminyl-tRNA synthetases. The reaction takes place in the presence of glutamine and ATP through an activated phospho-Asp-tRNA(Asn) or phospho-Glu-tRNA(Gln). The sequence is that of Aspartyl/glutamyl-tRNA(Asn/Gln) amidotransferase subunit C from Dinoroseobacter shibae (strain DSM 16493 / NCIMB 14021 / DFL 12).